Here is a 90-residue protein sequence, read N- to C-terminus: U7-theraphotoxin-Hhn1h (90 aa).

Residues 1 to 19 (MKTAIFTVVLALAVFAVLS) form the signal peptide. Positions 20–50 (FGWEANEKALSEEFTELIHEKEAASETEARE) are excised as a propeptide. Cystine bridges form between cysteine 51–cysteine 65, cysteine 58–cysteine 70, and cysteine 64–cysteine 81.

This sequence belongs to the neurotoxin 10 (Hwtx-1) family. 13 (Hntx-13) subfamily. As to expression, expressed by the venom gland.

It is found in the secreted. Its function is as follows. Ion channel inhibitor. The sequence is that of U7-theraphotoxin-Hhn1h from Cyriopagopus hainanus (Chinese bird spider).